The following is a 579-amino-acid chain: Folliculin (579 aa).

A disordered region spans residues 32 to 82 (GAGSGDSPGQVEQAEEEEGGIQMSSRVRAHSPAEGASTDSSSPGPKKSDMC). A phosphoserine mark is found at serine 62 and serine 73. The 157-residue stretch at 86-242 (RSLAVGHPGY…RNGNAARSLT (157 aa)) folds into the uDENN FLCN/SMCR8-type domain. Residues 287–310 (EKLADLEEESESWDNSEAEEEEKA) are a coiled coil. Residues 294–308 (EESESWDNSEAEEEE) show a composition bias toward acidic residues. The interval 294 to 320 (EESESWDNSEAEEEEKAPATAEGAEGR) is disordered. Residues serine 302, serine 406, serine 537, serine 542, and serine 571 each carry the phosphoserine modification. The cDENN FLCN/SMCR8-type domain maps to 339 to 491 (QPPKLSVFKS…ILNKMEAALT (153 aa)). Residues 493–558 (QNLSVDVVDQ…LLKFWMTGLS (66 aa)) form the dDENN FLCN/SMCR8-type domain.

It belongs to the folliculin family. In terms of assembly, interacts (via C-terminus) with FNIP1 or FNIP2 (via C-terminus). Component of the lysosomal folliculin complex (LFC), composed of FLCN, FNIP1 (or FNIP2), RagA/RRAGA or RagB/RRAGB GDP-bound, RagC/RRAGC or RagD/RRAGD GTP-bound, and Ragulator. Interaction with FNIP1 or FNIP2 mediates indirect interaction with the PRKAA1, PRKAB1 and PRKAG1 subunits of 5'-AMP-activated protein kinase (AMPK). Interacts with HSP90AA1 in the presence of FNIP1. Interacts with HSP70, STUB1, CDC37, AHSA1, CCT2, STIP1, PTGES3 and PPP5C. Interacts with GABARAP; interaction takes place in the presence of FNIP1 and/or FNIP2. Interacts with RILP; the interaction is direct and promotes association between RILP and RAB34. Interacts with KIF3A and KIF3B. Interacts with lactate dehydrogenase LDHA, but not LDHB; the interaction is direct, may preferentially bind LDHA dimers rather than tetramers, and regulates LDHA activity, acting as an uncompetitive inhibitor. Post-translationally, phosphorylation by ULK1 modulates the interaction with GABARAP and is required to regulate autophagy. In terms of tissue distribution, expressed in kidney.

The protein localises to the lysosome membrane. The protein resides in the cytoplasm. It localises to the cytosol. It is found in the cell projection. Its subcellular location is the cilium. The protein localises to the cytoskeleton. The protein resides in the microtubule organizing center. It localises to the centrosome. It is found in the spindle. Its subcellular location is the nucleus. Its activity is regulated as follows. GTPase-activating activity is inhibited in the folliculin complex (LFC), which stabilizes the GDP-bound state of RagA/RRAGA (or RagB/RRAGB), because Arg-164 is located far from the RagC/RRAGC or RagD/RRAGD nucleotide pocket. Disassembly of the LFC complex upon amino acid restimulation liberates the GTPase-activating activity. Functionally, multi-functional protein, involved in both the cellular response to amino acid availability and in the regulation of glycolysis. GTPase-activating protein that plays a key role in the cellular response to amino acid availability through regulation of the non-canonical mTORC1 signaling cascade controlling the MiT/TFE factors TFEB and TFE3. Activates mTORC1 by acting as a GTPase-activating protein: specifically stimulates GTP hydrolysis by RagC/RRAGC or RagD/RRAGD, promoting the conversion to the GDP-bound state of RagC/RRAGC or RagD/RRAGD, and thereby activating the kinase activity of mTORC1. The GTPase-activating activity is inhibited during starvation and activated in presence of nutrients. Acts as a key component for non-canonical mTORC1-dependent control of the MiT/TFE factors TFEB and TFE3, while it is not involved in mTORC1-dependent phosphorylation of canonical RPS6KB1/S6K1 and EIF4EBP1/4E-BP1. In low-amino acid conditions, the lysosomal folliculin complex (LFC) is formed on the membrane of lysosomes, which inhibits the GTPase-activating activity of FLCN, inactivates mTORC1 and maximizes nuclear translocation of TFEB and TFE3. Upon amino acid restimulation, RagA/RRAGA (or RagB/RRAGB) nucleotide exchange promotes disassembly of the LFC complex and liberates the GTPase-activating activity of FLCN, leading to activation of mTORC1 and subsequent cytoplasmic retention of TFEB and TFE3. Indirectly acts as a positive regulator of Wnt signaling by promoting mTOR-dependent cytoplasmic retention of MiT/TFE factor TFE3. Required for the exit of hematopoietic stem cell from pluripotency by promoting mTOR-dependent cytoplasmic retention of TFE3, thereby increasing Wnt signaling. Involved in the control of embryonic stem cells differentiation; together with LAMTOR1 it is necessary to recruit and activate RagC/RRAGC and RagD/RRAGD at the lysosomes, and to induce exit of embryonic stem cells from pluripotency via non-canonical, mTOR-independent TFE3 inactivation. Acts as an inhibitor of browning of adipose tissue by regulating mTOR-dependent cytoplasmic retention of TFE3. In response to flow stress, regulates STK11/LKB1 accumulation and mTORC1 activation through primary cilia: may act by recruiting STK11/LKB1 to primary cilia for activation of AMPK resided at basal bodies, causing mTORC1 down-regulation. Together with FNIP1 and/or FNIP2, regulates autophagy: following phosphorylation by ULK1, interacts with GABARAP and promotes autophagy. Required for starvation-induced perinuclear clustering of lysosomes by promoting association of RILP with its effector RAB34. Regulates glycolysis by binding to lactate dehydrogenase LDHA, acting as an uncompetitive inhibitor. This Rattus norvegicus (Rat) protein is Folliculin.